Here is a 431-residue protein sequence, read N- to C-terminus: Tol-Pal system protein TolB (431 aa).

Residues 1–26 (MRLMTKLGFRALVASCLIAAGGAANA) form the signal peptide. The segment at 411 to 431 (PQILSVQGGSVREPSWGPFMQ) is disordered.

Belongs to the TolB family. In terms of assembly, the Tol-Pal system is composed of five core proteins: the inner membrane proteins TolA, TolQ and TolR, the periplasmic protein TolB and the outer membrane protein Pal. They form a network linking the inner and outer membranes and the peptidoglycan layer.

Its subcellular location is the periplasm. Part of the Tol-Pal system, which plays a role in outer membrane invagination during cell division and is important for maintaining outer membrane integrity. This is Tol-Pal system protein TolB from Burkholderia ambifaria (strain MC40-6).